We begin with the raw amino-acid sequence, 435 residues long: Cyclic 2,3-diphosphoglycerate synthetase (435 aa).

It belongs to the cyclic 2,3-diphosphoglycerate synthetase family.

The protein localises to the cytoplasm. The catalysed reaction is (2R)-2,3-bisphosphoglycerate + ATP + H(+) = cyclic (2R)-2,3-bisphosphoglycerate + ADP + phosphate. Its function is as follows. Catalyzes the formation of cyclic 2,3-diphosphoglycerate (cDPG) by formation of an intramolecular phosphoanhydride bond at the expense of ATP. The protein is Cyclic 2,3-diphosphoglycerate synthetase of Pyrococcus horikoshii (strain ATCC 700860 / DSM 12428 / JCM 9974 / NBRC 100139 / OT-3).